The sequence spans 144 residues: MSISIPEELLLSDDDIPDMPDMLESEVVCALAELVGVLLIDIDIPDIELLPIDILAIDDIVDANVLLALDIASMLIDDMLDNIVLLALDIASMLIDAILDATVLDALDMASIFMLLPIFIPSILNVKYNTLFFIFYSILPTNVI.

Transmembrane regions (helical) follow at residues 27–47, 49–69, 83–103, and 106–126; these read VVCA…IPDI, LLPI…LLAL, IVLL…DATV, and ALDM…ILNV.

It localises to the membrane. This is an uncharacterized protein from Saccharomyces cerevisiae (strain ATCC 204508 / S288c) (Baker's yeast).